The primary structure comprises 664 residues: Macoilin (664 aa).

A run of 4 helical transmembrane segments spans residues 28-48 (TFLY…DFVV), 75-95 (AFSV…LLFI), 120-140 (VCLP…AIRF), and 154-174 (FAAH…KSYV). Residues 253–265 (REKGKEKDKDAKK) show a composition bias toward basic and acidic residues. Residues 253–274 (REKGKEKDKDAKKHNLGINNNN) are disordered. Position 305 is a phosphoserine (serine 305). Residues 320-348 (KNYKNASGVVNSSPRSHSATNGSIPSSSS) are compositionally biased toward polar residues. The disordered stretch occupies residues 320–375 (KNYKNASGVVNSSPRSHSATNGSIPSSSSKNEKKQKCTSKSPSTHKDLMENCIPNN). An N-linked (GlcNAc...) asparagine glycan is attached at asparagine 324. At serine 332 the chain carries Phosphoserine. Asparagine 340 and asparagine 452 each carry an N-linked (GlcNAc...) asparagine glycan. Positions 630-664 (TSPLSPVSPHYSSKFVETSPSGLDPNASVYQPLKK) are disordered. Phosphoserine is present on residues serine 631 and serine 634. The N-linked (GlcNAc...) asparagine glycan is linked to asparagine 655.

Belongs to the macoilin family.

It localises to the rough endoplasmic reticulum membrane. Its subcellular location is the nucleus membrane. In terms of biological role, plays a role in the regulation of neuronal activity. In Pan troglodytes (Chimpanzee), this protein is Macoilin (MACO1).